A 149-amino-acid chain; its full sequence is Pleckstrin homology domain-containing family J member 1 (149 aa).

Residues 15-108 enclose the PH domain; that stretch reads PAEMAAELGM…WMAALRQASY (94 aa).

This is Pleckstrin homology domain-containing family J member 1 (PLEKHJ1) from Bos taurus (Bovine).